A 392-amino-acid chain; its full sequence is L-rhamnonate dehydratase (392 aa).

Substrate-binding residues include H22 and R48. Mg(2+)-binding residues include D214, E240, and E268. The active-site Proton acceptor is H318. Position 338 (E338) interacts with substrate.

The protein belongs to the mandelate racemase/muconate lactonizing enzyme family. RhamD subfamily. In terms of assembly, homooctamer; tetramer of dimers. Mg(2+) serves as cofactor.

It catalyses the reaction L-rhamnonate = 2-dehydro-3-deoxy-L-rhamnonate + H2O. Functionally, catalyzes the dehydration of L-rhamnonate to 2-keto-3-deoxy-L-rhamnonate (KDR). The polypeptide is L-rhamnonate dehydratase (Paraburkholderia phytofirmans (strain DSM 17436 / LMG 22146 / PsJN) (Burkholderia phytofirmans)).